A 430-amino-acid chain; its full sequence is Asparagine--tRNA ligase (430 aa).

Belongs to the class-II aminoacyl-tRNA synthetase family. Homodimer.

The protein localises to the cytoplasm. It catalyses the reaction tRNA(Asn) + L-asparagine + ATP = L-asparaginyl-tRNA(Asn) + AMP + diphosphate + H(+). This is Asparagine--tRNA ligase from Staphylococcus aureus (strain MW2).